The chain runs to 510 residues: Lysine--tRNA ligase (510 aa).

Residues glutamate 420 and glutamate 427 each contribute to the Mg(2+) site.

It belongs to the class-II aminoacyl-tRNA synthetase family. Homodimer. It depends on Mg(2+) as a cofactor.

The protein resides in the cytoplasm. It carries out the reaction tRNA(Lys) + L-lysine + ATP = L-lysyl-tRNA(Lys) + AMP + diphosphate. This chain is Lysine--tRNA ligase, found in Ralstonia nicotianae (strain ATCC BAA-1114 / GMI1000) (Ralstonia solanacearum).